Consider the following 416-residue polypeptide: Actin-like protein 9 (416 aa).

A disordered region spans residues 1-23 (MDPNQGNPLEPQDSPEIPKPSLN).

This sequence belongs to the actin family. Interacts with ACTL7A.

It is found in the cytoplasmic vesicle. The protein localises to the secretory vesicle. It localises to the acrosome. Its subcellular location is the cytoplasm. The protein resides in the cytoskeleton. It is found in the perinuclear theca. Its function is as follows. Testis-specic protein that plays an important role in fusion of proacrosomal vesicles and perinuclear theca formation. The chain is Actin-like protein 9 (ACTL9) from Bos taurus (Bovine).